The chain runs to 437 residues: MLWKLTDNIKYEDCEDRHDGTSNGTARLPQLGTVGQSPYTSAPPLSHTPNADFQPPYFPPPYQPIYPQSQDPYSHVNDPYSLNPLHAQPQPQHPGWPGQRQSQESGLLHTHRGLPHQLSGLDPRRDYRRHEDLLHGPHALGSGLGDLPIHSLPHAIEDVPHVEDPGINIPDQTVIKKGPVSLSKSNSNAVSAIPINKDNLFGGVVNPNEVFCSVPGRLSLLSSTSKYKVTVAEVQRRLSPPECLNASLLGGVLRRAKSKNGGRSLREKLDKIGLNLPAGRRKAANVTLLTSLVEGEAVHLARDFGYVCETEFPAKAVAEFLNRQHSDPNEQVARKNMLLATKQICKEFTDLLAQDRSPLGNSRPNPILEPGIQSCLTHFNLISHGFGSPAVCAAVTALQNYLTEALKAMDKMYLSNNPNSHTDNSAKSSDKEEKHRK.

Residue lysine 10 forms a Glycyl lysine isopeptide (Lys-Gly) (interchain with G-Cter in SUMO); alternate linkage. Lysine 10 participates in a covalent cross-link: Glycyl lysine isopeptide (Lys-Gly) (interchain with G-Cter in SUMO2); alternate. The segment at 14–107 (CEDRHDGTSN…GQRQSQESGL (94 aa)) is disordered. The PPxY motif motif lies at 57–62 (YFPPPY). 2 stretches are compositionally biased toward low complexity: residues 65–74 (IYPQSQDPYS) and 88–101 (QPQPQHPGWPGQRQ). Glycyl lysine isopeptide (Lys-Gly) (interchain with G-Cter in SUMO2) cross-links involve residues lysine 177 and lysine 184. Position 239 is a phosphoserine; by PKA (serine 239). The tract at residues 280 to 410 (RRKAANVTLL…YLTEALKAMD (131 aa)) is H-S-H (helix-span-helix), dimerization. The segment covering 414 to 427 (LSNNPNSHTDNSAK) has biased composition (polar residues). A disordered region spans residues 414–437 (LSNNPNSHTDNSAKSSDKEEKHRK). The segment covering 428 to 437 (SSDKEEKHRK) has biased composition (basic and acidic residues).

This sequence belongs to the AP-2 family. Binds DNA as a dimer. Can form homodimers or heterodimers with other AP-2 family members. Interacts with WWOX. Interacts with UBE2I. Interacts with RALBP1 in a complex also containing EPN1 and NUMB during interphase and mitosis. Interacts with CITED4. Interacts with KCTD1; this interaction represses transcription activation. Interacts (via C-terminus) with CITED2 (via C-terminus); the interaction stimulates TFAP2A-transcriptional activation. Interacts (via N-terminus) with EP300 (via N-terminus); the interaction requires CITED2. Interacts with KCTD15; this interaction inhibits TFAP2A transcriptional activation. Sumoylated on Lys-10; which inhibits transcriptional activity.

The protein localises to the nucleus. In terms of biological role, sequence-specific DNA-binding protein that interacts with inducible viral and cellular enhancer elements to regulate transcription of selected genes. AP-2 factors bind to the consensus sequence 5'-GCCNNNGGC-3' and activate genes involved in a large spectrum of important biological functions including proper eye, face, body wall, limb and neural tube development. They also suppress a number of genes including MCAM/MUC18, C/EBP alpha and MYC. AP-2-alpha is the only AP-2 protein required for early morphogenesis of the lens vesicle. Together with the CITED2 coactivator, stimulates the PITX2 P1 promoter transcription activation. Associates with chromatin to the PITX2 P1 promoter region. This chain is Transcription factor AP-2-alpha (Tfap2a), found in Mus musculus (Mouse).